The chain runs to 582 residues: uncharacterized protein (582 aa).

6 helical membrane-spanning segments follow: residues 17-37 (VAML…LPTV), 57-77 (LGAV…GAVY), 131-151 (MTAT…IMAI), 156-176 (ALTW…YWII), 239-259 (ALML…LIWF), and 271-291 (VGSL…VLMA). Positions 17-300 (VAMLMMLQLV…ATMTLAVLPR (284 aa)) constitute an ABC transmembrane type-1 domain. One can recognise an ABC transporter domain in the interval 335–571 (VRLAGATFTY…CPTYAEFAAS (237 aa)). 369–376 (GSTGSGKS) serves as a coordination point for ATP.

The protein belongs to the ABC transporter superfamily. MsbA family.

Its subcellular location is the cell membrane. This is an uncharacterized protein from Mycobacterium bovis (strain ATCC BAA-935 / AF2122/97).